The primary structure comprises 491 residues: Serine/threonine-protein kinase 3 (491 aa).

Met1 carries the post-translational modification N-acetylmethionine. Residue Ser15 is modified to Phosphoserine. Residues 27-278 (FDVLEKLGEG…ATQLLQHPFI (252 aa)) form the Protein kinase domain. ATP contacts are provided by residues 33 to 41 (LGEGSYGSV) and Lys56. The residue at position 117 (Thr117) is a Phosphothreonine; by PKB/AKT1. Asp146 serves as the catalytic Proton acceptor. Residues Asn151 and Asp164 each coordinate Mg(2+). Residue Thr180 is modified to Phosphothreonine; by autocatalysis. A coiled-coil region spans residues 291–324 (ITEGMEIKAKRHEEQQRELEDEEENSDEDELDSH). 2 disordered regions span residues 301-343 (RHEE…TSTM) and 370-392 (EDEEEEDGTMKRNATSPQVQRPS). Over residues 309 to 321 (LEDEEENSDEDEL) the composition is skewed to acidic residues. The residue at position 316 (Ser316) is a Phosphoserine. Over residues 326–343 (MVKTSSEGVGTMRATSTM) the composition is skewed to polar residues. 2 positions are modified to phosphothreonine: Thr336 and Thr378. Residues 381 to 390 (RNATSPQVQR) are compositionally biased toward polar residues. Residue Thr384 is modified to Phosphothreonine; by PKB/AKT1. Phosphoserine occurs at positions 385 and 444. Residues 437 to 484 (FDFLKNLSLEELQMRLKALDPMMEREIEELHQRYSAKRQPILDAMDAK) form the SARAH domain.

Belongs to the protein kinase superfamily. STE Ser/Thr protein kinase family. STE20 subfamily. Homodimer; mediated via the coiled-coil region. Interacts with NORE1, which inhibits autoactivation. Interacts with and stabilizes SAV1. Interacts with RAF1, which prevents dimerization and phosphorylation. Interacts with RASSF1. Interacts (via SARAH domain) with isoform 1 of NEK2. Interacts with ESR1 only in the presence of SAV1. Interacts with PKB/AKT1. Forms a tripartite complex with MOBKL1B and STK38. Interacts with RASSF2 (via SARAH domain). Interacts with DLG5 (via PDZ domain 3). Interacts with LATS1; this interaction is inhibited in the presence of DLG5. Interacts with MARK3 in the presence of DLG5. Interacts with RASSF5; this interaction inhibits STK3 autoactivation through heterodimerization. Interacts (when phosphorylated) with SLMAP (via FHA domain); the interaction associates STK3 with the STRIPAK complex. The cofactor is Mg(2+). Post-translationally, autophosphorylated on two residues Thr-174 and Thr-180, leading to activation. Phosphorylation at Thr-117 and Thr-384 by PKB/AKT1, leads to inhibition of its: cleavage, kinase activity, autophosphorylation at Thr-180, binding to RASSF1 and nuclear translocation, and increase in its binding to RAF1. Phosphorylated at Ser-15 by PLK1, leading to activation. In terms of processing, proteolytically cleaved by caspase-3 during apoptosis. Proteolytic cleavage results in kinase activation and nuclear translocation of the truncated form (MST1/N). Ubiquitinated by TRIM69; leading to its redistribution to the perinuclear cytoskeleton.

Its subcellular location is the cytoplasm. It localises to the nucleus. The enzyme catalyses L-seryl-[protein] + ATP = O-phospho-L-seryl-[protein] + ADP + H(+). It catalyses the reaction L-threonyl-[protein] + ATP = O-phospho-L-threonyl-[protein] + ADP + H(+). Its activity is regulated as follows. Inhibited by the C-terminal non-catalytic region. Activated by caspase-cleavage. Full activation also requires homodimerization and autophosphorylation of Thr-180, which are inhibited by the proto-oncogene product RAF1. Activated by RASSF1 which acts by preventing its dephosphorylation. When autophosphorylated at Thr-180, recruits STRIPAK complex and promotes PP2A-mediated dephosphorylation and inactivation of STK3. Its function is as follows. Stress-activated, pro-apoptotic kinase which, following caspase-cleavage, enters the nucleus and induces chromatin condensation followed by internucleosomal DNA fragmentation. Key component of the Hippo signaling pathway which plays a pivotal role in organ size control and tumor suppression by restricting proliferation and promoting apoptosis. The core of this pathway is composed of a kinase cascade wherein STK3/MST2 and STK4/MST1, in complex with its regulatory protein SAV1, phosphorylates and activates LATS1/2 in complex with its regulatory protein MOB1, which in turn phosphorylates and inactivates YAP1 oncoprotein and WWTR1/TAZ. Phosphorylation of YAP1 by LATS2 inhibits its translocation into the nucleus to regulate cellular genes important for cell proliferation, cell death, and cell migration. STK3/MST2 and STK4/MST1 are required to repress proliferation of mature hepatocytes, to prevent activation of facultative adult liver stem cells (oval cells), and to inhibit tumor formation. Phosphorylates NKX2-1. Phosphorylates NEK2 and plays a role in centrosome disjunction by regulating the localization of NEK2 to centrosomes, and its ability to phosphorylate CROCC and CEP250. In conjunction with SAV1, activates the transcriptional activity of ESR1 through the modulation of its phosphorylation. Positively regulates RAF1 activation via suppression of the inhibitory phosphorylation of RAF1 on 'Ser-259'. Phosphorylates MOBKL1A and RASSF2. Phosphorylates MOBKL1B on 'Thr-74'. Acts cooperatively with MOBKL1B to activate STK38. In Rattus norvegicus (Rat), this protein is Serine/threonine-protein kinase 3 (Stk3).